An 82-amino-acid chain; its full sequence is Small ribosomal subunit protein bS16 (82 aa).

The protein belongs to the bacterial ribosomal protein bS16 family.

The sequence is that of Small ribosomal subunit protein bS16 from Francisella tularensis subsp. holarctica (strain FTNF002-00 / FTA).